The following is a 544-amino-acid chain: Zinc finger and SCAN domain-containing protein 25 (544 aa).

Glycyl lysine isopeptide (Lys-Gly) (interchain with G-Cter in SUMO2) cross-links involve residues Lys3 and Lys22. The 83-residue stretch at 42-124 (RLRFRQFRYQ…AMVEDLTERA (83 aa)) folds into the SCAN box domain. A Glycyl lysine isopeptide (Lys-Gly) (interchain with G-Cter in SUMO2) cross-link involves residue Lys128. The disordered stretch occupies residues 157–189 (VEVKPEWGMPPGEGVQGPDPGTEEQLSQDPGDE). Residues Lys278 and Lys285 each participate in a glycyl lysine isopeptide (Lys-Gly) (interchain with G-Cter in SUMO2) cross-link. 6 C2H2-type zinc fingers span residues 348–370 (FQCP…QRTH), 375–397 (YGCV…QRTH), 403–425 (YVCS…QRSH), 431–453 (YKCG…RRTH), 459–480 (YTCE…RRAH), and 486–508 (YGCQ…QRIH). Residues 514–536 (YHCPACGRSFNQRSILNRHQKTQ) form a C2H2-type 7; degenerate zinc finger.

The protein belongs to the krueppel C2H2-type zinc-finger protein family.

The protein localises to the nucleus. In terms of biological role, may be involved in transcriptional regulation. The chain is Zinc finger and SCAN domain-containing protein 25 (ZSCAN25) from Homo sapiens (Human).